A 216-amino-acid chain; its full sequence is Uracil phosphoribosyltransferase (216 aa).

5-phospho-alpha-D-ribose 1-diphosphate-binding positions include arginine 85, arginine 110, and 135 to 143 (DPMVATGYS). Residues isoleucine 200 and 205-207 (GDA) each bind uracil. Aspartate 206 contacts 5-phospho-alpha-D-ribose 1-diphosphate.

Belongs to the UPRTase family. Mg(2+) serves as cofactor.

It catalyses the reaction UMP + diphosphate = 5-phospho-alpha-D-ribose 1-diphosphate + uracil. It functions in the pathway pyrimidine metabolism; UMP biosynthesis via salvage pathway; UMP from uracil: step 1/1. Its activity is regulated as follows. Allosterically activated by GTP. Catalyzes the conversion of uracil and 5-phospho-alpha-D-ribose 1-diphosphate (PRPP) to UMP and diphosphate. The chain is Uracil phosphoribosyltransferase from Paraburkholderia phymatum (strain DSM 17167 / CIP 108236 / LMG 21445 / STM815) (Burkholderia phymatum).